Consider the following 154-residue polypeptide: 6,7-dimethyl-8-ribityllumazine synthase (154 aa).

5-amino-6-(D-ribitylamino)uracil is bound by residues Phe-22, 56–58 (AFE), and 80–82 (AVI). 85–86 (ST) contacts (2S)-2-hydroxy-3-oxobutyl phosphate. His-88 acts as the Proton donor in catalysis. Phe-113 is a 5-amino-6-(D-ribitylamino)uracil binding site. Residue Arg-127 coordinates (2S)-2-hydroxy-3-oxobutyl phosphate.

Belongs to the DMRL synthase family.

The enzyme catalyses (2S)-2-hydroxy-3-oxobutyl phosphate + 5-amino-6-(D-ribitylamino)uracil = 6,7-dimethyl-8-(1-D-ribityl)lumazine + phosphate + 2 H2O + H(+). It participates in cofactor biosynthesis; riboflavin biosynthesis; riboflavin from 2-hydroxy-3-oxobutyl phosphate and 5-amino-6-(D-ribitylamino)uracil: step 1/2. In terms of biological role, catalyzes the formation of 6,7-dimethyl-8-ribityllumazine by condensation of 5-amino-6-(D-ribitylamino)uracil with 3,4-dihydroxy-2-butanone 4-phosphate. This is the penultimate step in the biosynthesis of riboflavin. The sequence is that of 6,7-dimethyl-8-ribityllumazine synthase from Clostridium kluyveri (strain NBRC 12016).